Consider the following 339-residue polypeptide: Ketol-acid reductoisomerase (NADP(+)) (339 aa).

One can recognise a KARI N-terminal Rossmann domain in the interval 1–182 (MRVYYDRDAD…GGGRSGIIET (182 aa)). NADP(+)-binding positions include 24–27 (YGSQ), Lys48, Ser51, Thr53, and 83–86 (DELQ). His108 is an active-site residue. NADP(+) is bound at residue Gly134. Positions 183 to 328 (NFREECETDL…AKLRAMMPWI (146 aa)) constitute a KARI C-terminal knotted domain. Mg(2+) is bound by residues Asp191, Glu195, Glu227, and Glu231. Ser252 contributes to the substrate binding site.

Belongs to the ketol-acid reductoisomerase family. Mg(2+) is required as a cofactor.

It carries out the reaction (2R)-2,3-dihydroxy-3-methylbutanoate + NADP(+) = (2S)-2-acetolactate + NADPH + H(+). The catalysed reaction is (2R,3R)-2,3-dihydroxy-3-methylpentanoate + NADP(+) = (S)-2-ethyl-2-hydroxy-3-oxobutanoate + NADPH + H(+). It functions in the pathway amino-acid biosynthesis; L-isoleucine biosynthesis; L-isoleucine from 2-oxobutanoate: step 2/4. The protein operates within amino-acid biosynthesis; L-valine biosynthesis; L-valine from pyruvate: step 2/4. Its function is as follows. Involved in the biosynthesis of branched-chain amino acids (BCAA). Catalyzes an alkyl-migration followed by a ketol-acid reduction of (S)-2-acetolactate (S2AL) to yield (R)-2,3-dihydroxy-isovalerate. In the isomerase reaction, S2AL is rearranged via a Mg-dependent methyl migration to produce 3-hydroxy-3-methyl-2-ketobutyrate (HMKB). In the reductase reaction, this 2-ketoacid undergoes a metal-dependent reduction by NADPH to yield (R)-2,3-dihydroxy-isovalerate. In Mesorhizobium japonicum (strain LMG 29417 / CECT 9101 / MAFF 303099) (Mesorhizobium loti (strain MAFF 303099)), this protein is Ketol-acid reductoisomerase (NADP(+)).